Reading from the N-terminus, the 353-residue chain is Protein RecA (353 aa).

An ATP-binding site is contributed by 73–80; sequence GPESSGKT.

The protein belongs to the RecA family.

The protein resides in the cytoplasm. Its function is as follows. Can catalyze the hydrolysis of ATP in the presence of single-stranded DNA, the ATP-dependent uptake of single-stranded DNA by duplex DNA, and the ATP-dependent hybridization of homologous single-stranded DNAs. It interacts with LexA causing its activation and leading to its autocatalytic cleavage. The polypeptide is Protein RecA (Bordetella avium (strain 197N)).